The chain runs to 407 residues: Putative replication protein A (407 aa).

Belongs to the ParA family.

This Sinorhizobium fredii (strain NBRC 101917 / NGR234) protein is Putative replication protein A.